A 238-amino-acid polypeptide reads, in one-letter code: MVDSMKFVEKAKIEFENPIVIEAFPGTGLVGSIAGFQIIKDLNLKYFGYFEVDGILPLTTIEKGIPYPPVRAYANKDFIILFSDIIISPFKINGLAEFIVKTFSNKNPKLFVSLGGIMAGKSEKVFGIANKEELIEDLKNYVEIFDFGVVGGMGGNLLIKCHDNGFDAIGLLAETVGIRPDPRGGANLLEVLNKMFNLNVNIENLIKEAEAIENKLKELAEQHLKMMSKSRKEYPMYI.

Transmembrane regions (helical) follow at residues 19 to 39 (IVIE…FQII), 79 to 99 (IILF…AEFI), and 141 to 161 (YVEI…LIKC).

It localises to the cell membrane. This is an uncharacterized protein from Methanocaldococcus jannaschii (strain ATCC 43067 / DSM 2661 / JAL-1 / JCM 10045 / NBRC 100440) (Methanococcus jannaschii).